Consider the following 270-residue polypeptide: tRNA pseudouridine synthase A (270 aa).

Residue D51 is the Nucleophile of the active site. Substrate is bound at residue Y109.

This sequence belongs to the tRNA pseudouridine synthase TruA family. As to quaternary structure, homodimer.

It catalyses the reaction uridine(38/39/40) in tRNA = pseudouridine(38/39/40) in tRNA. Functionally, formation of pseudouridine at positions 38, 39 and 40 in the anticodon stem and loop of transfer RNAs. The chain is tRNA pseudouridine synthase A from Variovorax paradoxus (strain S110).